The chain runs to 759 residues: Subtilisin-like protease SBT3.10 (759 aa).

An N-terminal signal peptide occupies residues 1–25 (MSKTIILLAFFLSIVLNVQISFVVA). A propeptide spans 26-108 (ESKVYVVYLG…VIPNTLYEMT (83 aa)) (activation peptide). Residues 29-106 (VYVVYLGEKE…VQVIPNTLYE (78 aa)) form the Inhibitor I9 domain. The region spanning 112 to 606 (TWDYLGVSPG…GGLINPEKAV (495 aa)) is the Peptidase S8 domain. D142 functions as the Charge relay system in the catalytic mechanism. N-linked (GlcNAc...) asparagine glycans are attached at residues N175 and N202. H218 (charge relay system) is an active-site residue. N-linked (GlcNAc...) asparagine glycans are attached at residues N233 and N361. One can recognise a PA domain in the interval 390-464 (DCEKLSANPK…ELGTDILFYI (75 aa)). Residue S537 is the Charge relay system of the active site.

It belongs to the peptidase S8 family.

It localises to the secreted. The polypeptide is Subtilisin-like protease SBT3.10 (Arabidopsis thaliana (Mouse-ear cress)).